The sequence spans 129 residues: Lysozyme C (129 aa).

The 129-residue stretch at 1–129 (KVFGRCELAA…VRVWIKGCRL (129 aa)) folds into the C-type lysozyme domain. 4 disulfide bridges follow: Cys-6–Cys-127, Cys-30–Cys-115, Cys-64–Cys-80, and Cys-76–Cys-94. Active-site residues include Glu-35 and Asp-52.

The protein belongs to the glycosyl hydrolase 22 family. As to quaternary structure, monomer.

The protein resides in the secreted. It carries out the reaction Hydrolysis of (1-&gt;4)-beta-linkages between N-acetylmuramic acid and N-acetyl-D-glucosamine residues in a peptidoglycan and between N-acetyl-D-glucosamine residues in chitodextrins.. In terms of biological role, lysozymes have primarily a bacteriolytic function; those in tissues and body fluids are associated with the monocyte-macrophage system and enhance the activity of immunoagents. This Numida meleagris (Helmeted guineafowl) protein is Lysozyme C (LYZ).